A 492-amino-acid polypeptide reads, in one-letter code: Glycylpeptide N-tetradecanoyltransferase 2 (492 aa).

The tract at residues 1 to 77 (MAEDSESAAS…SASDSQEIKN (77 aa)) is disordered. Acidic residues predominate over residues 15-32 (ELDDQDTCGIDGDNEEEN). Basic residues predominate over residues 46 to 57 (KKKKKKQKRKKE). Residues 61 to 72 (SGGTKSDSASDS) show a composition bias toward polar residues. Residues His111, Trp116, Leu244, Val246, Ser252, Arg254, Val255, and Ala256 each contribute to the tetradecanoyl-CoA site.

This sequence belongs to the NMT family.

Its subcellular location is the cytoplasm. The protein localises to the membrane. It catalyses the reaction N-terminal glycyl-[protein] + tetradecanoyl-CoA = N-tetradecanoylglycyl-[protein] + CoA + H(+). The catalysed reaction is N-terminal glycyl-L-lysyl-[protein] + tetradecanoyl-CoA = N-terminal glycyl-(N(6)-tetradecanoyl)-L-lysyl-[protein] + CoA + H(+). Functionally, adds a myristoyl group to the N-terminal glycine residue of certain cellular and viral proteins. Also able to mediate N-terminal lysine myristoylation of proteins. This chain is Glycylpeptide N-tetradecanoyltransferase 2, found in Danio rerio (Zebrafish).